Consider the following 860-residue polypeptide: MQEQYRPEDIEPQVQLHWQEKQTFKVTEDNSKEKYYCLSMLPYPSGRLHMGHVRNYTIGDVISRYQRMLGKNVLQPIGWDAFGLPAEGAAVKNNTAPAPWTYANIEYMKGQLKTLGFGYDWDREVTTCTPEYYHWEQWFFTKLYEKGLVYKKTSSVNWCPHDLTVLANEQVVDGCCWRCDSKVERKEIPQWFIKITDYAEELLSDLETLEEWPEQVKTMQRNWIGRSEGVEITFDVADSQEKLTVYTTRPDTFLGATYVAIAAGHPLAKQAAENNPELVAFIDECRNTKVAEADMATMEKKGMATGMFAIHSLTKEKVAIWVANFVLMEYGTGAVMAVPGHDQRDWEFATKYNLPIKAVILDNEGNEPNVHEAPVTDKNILFNSGEFSGLNHEAGFNAIANKLVEMGVGKRKVNYRLRDWGVSRQRYWGAPIPMATLENGTVVPVPADQLPVILPEDVKMDGITSPIKADPEWAKTTINGQPALRETDTFDTFMESSWYYARYTCPDYDKGLLDPAAANYWLPVDQYIGGIEHAIMHLMYFRFFHKLMRDASLVNSNEPAKRLLCQGMVLADAFYYIGKNGEKIWVSPADTIVERDDKGRIVKATDKEGHELVYTGMSKMSKSKNNGIDPQLMVEKYGADTVRLFMMFAAPPELTLEWQESSVEGANRFLKRVWRLVYEHSSKGATQPLDITNLTVEQKDLFRDLHKTIAKVTDDVGRRQAFNTAIAAVMELMNKLTRAPQETEQDRALMQEALLAVVRMLSPITPHACFIMWQALGGEGGIDTADWPQANEQAMVDDTKLVVIQVNGKVRGRVTVPADATKEYVHDLAAQEYGVAKYLEGVTIRKVIYVPGKLLNLVVG.

Residues 42–52 carry the 'HIGH' region motif; that stretch reads PYPSGRLHMGH. A 'KMSKS' region motif is present at residues 619–623; the sequence is KMSKS. Lysine 622 provides a ligand contact to ATP.

The protein belongs to the class-I aminoacyl-tRNA synthetase family.

Its subcellular location is the cytoplasm. It carries out the reaction tRNA(Leu) + L-leucine + ATP = L-leucyl-tRNA(Leu) + AMP + diphosphate. The protein is Leucine--tRNA ligase of Photorhabdus laumondii subsp. laumondii (strain DSM 15139 / CIP 105565 / TT01) (Photorhabdus luminescens subsp. laumondii).